Consider the following 173-residue polypeptide: uncharacterized protein (173 aa).

Disordered regions lie at residues Met-1 to Ala-23 and Thr-48 to Arg-173. Positions Gly-49–Pro-60 are enriched in low complexity. Residues Pro-70–Leu-83 are compositionally biased toward pro residues. The span at Pro-123–Ala-136 shows a compositional bias: low complexity.

This is an uncharacterized protein from Homo sapiens (Human).